The chain runs to 188 residues: Elongation factor P (188 aa).

Lys34 is modified (N6-(3,6-diaminohexanoyl)-5-hydroxylysine).

It belongs to the elongation factor P family. May be beta-lysylated on the epsilon-amino group of Lys-34 by the combined action of EpmA and EpmB, and then hydroxylated on the C5 position of the same residue by EpmC (if this protein is present). Lysylation is critical for the stimulatory effect of EF-P on peptide-bond formation. The lysylation moiety may extend toward the peptidyltransferase center and stabilize the terminal 3-CCA end of the tRNA. Hydroxylation of the C5 position on Lys-34 may allow additional potential stabilizing hydrogen-bond interactions with the P-tRNA.

The protein localises to the cytoplasm. The protein operates within protein biosynthesis; polypeptide chain elongation. Functionally, involved in peptide bond synthesis. Alleviates ribosome stalling that occurs when 3 or more consecutive Pro residues or the sequence PPG is present in a protein, possibly by augmenting the peptidyl transferase activity of the ribosome. Modification of Lys-34 is required for alleviation. This chain is Elongation factor P, found in Vibrio campbellii (strain ATCC BAA-1116).